Here is a 376-residue protein sequence, read N- to C-terminus: Deoxyhypusine synthase (376 aa).

NAD(+)-binding positions include 112–116, 138–140, Glu144, and Asp245; these read SNLVS and TAG. 143 to 144 contributes to the spermidine binding site; the sequence is EE. Asp250 contributes to the spermidine binding site. Gly292 serves as a coordination point for NAD(+). His297 provides a ligand contact to spermidine. Position 317 to 318 (317 to 318) interacts with NAD(+); the sequence is TA. Spermidine contacts are provided by residues 323–325 and 332–338; these read GSD and EAISWGK. Lys338 acts as the Nucleophile in catalysis. 351–352 is an NAD(+) binding site; sequence DA.

It belongs to the deoxyhypusine synthase family. NAD(+) is required as a cofactor.

It catalyses the reaction [eIF5A protein]-L-lysine + spermidine = [eIF5A protein]-deoxyhypusine + propane-1,3-diamine. It participates in protein modification; eIF5A hypusination. Catalyzes the NAD-dependent oxidative cleavage of spermidine and the subsequent transfer of the butylamine moiety of spermidine to the epsilon-amino group of a specific lysine residue of the eIF-5A precursor protein to form the intermediate deoxyhypusine residue. Also able to produce homospermidine from putrescine. The polypeptide is Deoxyhypusine synthase (DHS) (Musa acuminata (Banana)).